The primary structure comprises 637 residues: Epithelial sodium channel subunit alpha (637 aa).

Positions 1–34 (MGTASRGGSVKAEKMPEGEKTRQCKQETEQQQKE) are disordered. Over 1-76 (MGTASRGGSV…VCSKKNKMKT (76 aa)) the chain is Cytoplasmic. Over residues 11-34 (KAEKMPEGEKTRQCKQETEQQQKE) the composition is skewed to basic and acidic residues. The helical transmembrane segment at 77-97 (AFWSVLFILTFGLMYWQFGIL) threads the bilayer. Residues 98-548 (YREYFSYPVN…NQWSLWFGSS (451 aa)) lie on the Extracellular side of the membrane. 10 cysteine pairs are disulfide-bonded: Cys-125/Cys-292, Cys-217/Cys-224, Cys-269/Cys-276, Cys-380/Cys-465, Cys-402/Cys-442, Cys-402/Cys-461, Cys-406/Cys-457, Cys-415/Cys-442, Cys-415/Cys-465, and Cys-417/Cys-431. Residues 549–569 (VLSVMELAELILDFTVITFIL) form a helical membrane-spanning segment. Over 570 to 637 (AFRWFRSKQW…PSKDGETGLE (68 aa)) the chain is Cytoplasmic.

Belongs to the amiloride-sensitive sodium channel (TC 1.A.6) family. SCNN1A subfamily. In terms of assembly, heterotrimer; containing an alpha/SCNN1A, a beta/SCNN1B and a gamma/SCNN1G subunit. The long isoform has been found in cochlea, colon, and cartilage. The short isoform is only found in cochlea.

It localises to the apical cell membrane. Its subcellular location is the cell projection. The protein localises to the cilium. It is found in the cytoplasmic granule. The protein resides in the cytoplasm. It localises to the cytoplasmic vesicle. Its subcellular location is the secretory vesicle. The protein localises to the acrosome. It is found in the flagellum. It catalyses the reaction Na(+)(in) = Na(+)(out). With respect to regulation, originally identified and characterized by its inhibition by the diuretic drug amiloride. Its function is as follows. This is one of the three pore-forming subunits of the heterotrimeric epithelial sodium channel (ENaC), a critical regulator of sodium balance and fluid homeostasis. ENaC operates in epithelial tissues, where it mediates the electrodiffusion of sodium ions from extracellular fluid through the apical membrane of cells, with water following osmotically. This Gallus gallus (Chicken) protein is Epithelial sodium channel subunit alpha.